Here is a 338-residue protein sequence, read N- to C-terminus: Ketol-acid reductoisomerase (NADP(+)) (338 aa).

In terms of domain architecture, KARI N-terminal Rossmann spans 1 to 181 (MKVYYENDAD…GGTKAGVIET (181 aa)). Residues 24–27 (FGSQ), Lys47, Ser50, Ser52, and 82–85 (DQVQ) each bind NADP(+). His107 is an active-site residue. NADP(+) is bound at residue Gly133. One can recognise a KARI C-terminal knotted domain in the interval 182-327 (NFKDETETDL…EKLRGMMSWL (146 aa)). Mg(2+) contacts are provided by Asp190, Glu194, Glu226, and Glu230. Ser251 lines the substrate pocket.

It belongs to the ketol-acid reductoisomerase family. The cofactor is Mg(2+).

The catalysed reaction is (2R)-2,3-dihydroxy-3-methylbutanoate + NADP(+) = (2S)-2-acetolactate + NADPH + H(+). It catalyses the reaction (2R,3R)-2,3-dihydroxy-3-methylpentanoate + NADP(+) = (S)-2-ethyl-2-hydroxy-3-oxobutanoate + NADPH + H(+). The protein operates within amino-acid biosynthesis; L-isoleucine biosynthesis; L-isoleucine from 2-oxobutanoate: step 2/4. It participates in amino-acid biosynthesis; L-valine biosynthesis; L-valine from pyruvate: step 2/4. Its function is as follows. Involved in the biosynthesis of branched-chain amino acids (BCAA). Catalyzes an alkyl-migration followed by a ketol-acid reduction of (S)-2-acetolactate (S2AL) to yield (R)-2,3-dihydroxy-isovalerate. In the isomerase reaction, S2AL is rearranged via a Mg-dependent methyl migration to produce 3-hydroxy-3-methyl-2-ketobutyrate (HMKB). In the reductase reaction, this 2-ketoacid undergoes a metal-dependent reduction by NADPH to yield (R)-2,3-dihydroxy-isovalerate. The sequence is that of Ketol-acid reductoisomerase (NADP(+)) from Chloroherpeton thalassium (strain ATCC 35110 / GB-78).